The following is a 617-amino-acid chain: Zinc finger protein 613 (617 aa).

The 71-residue stretch at 8–78 (LTLEDVAVEF…ENEIHSQICP (71 aa)) folds into the KRAB domain. 12 consecutive C2H2-type zinc fingers follow at residues 204 to 226 (HVCT…QRVH), 232 to 254 (HGCS…QRNH), 260 to 282 (YECT…QKIH), 288 to 310 (YICS…QRVH), 316 to 338 (HGCS…QRTH), 344 to 366 (YECT…QKAH), 372 to 394 (YICR…QRIH), 400 to 422 (YICN…RRTH), 428 to 450 (YVCN…QRFH), 456 to 478 (FVCT…QRIH), 484 to 506 (YTCS…RRTH), and 512 to 535 (YGCS…GMLH).

The protein belongs to the krueppel C2H2-type zinc-finger protein family.

The protein resides in the nucleus. May be involved in transcriptional regulation. The sequence is that of Zinc finger protein 613 (ZNF613) from Homo sapiens (Human).